We begin with the raw amino-acid sequence, 100 residues long: MELTPREKDKLFLFTAALLAERRKARGLKLNYPEAVALISAAVLEGARDGKTVAQLMSEGREVLTRADVMDGVPEMISDIQVEATFPDGTKLVTVHQPIA.

It belongs to the urease gamma subunit family. As to quaternary structure, heterotrimer of UreA (gamma), UreB (beta) and UreC (alpha) subunits. Three heterotrimers associate to form the active enzyme.

It localises to the cytoplasm. It carries out the reaction urea + 2 H2O + H(+) = hydrogencarbonate + 2 NH4(+). It functions in the pathway nitrogen metabolism; urea degradation; CO(2) and NH(3) from urea (urease route): step 1/1. The chain is Urease subunit gamma from Paracidovorax citrulli (strain AAC00-1) (Acidovorax citrulli).